The sequence spans 373 residues: UDP-N-acetylglucosamine--N-acetylmuramyl-(pentapeptide) pyrophosphoryl-undecaprenol N-acetylglucosamine transferase (373 aa).

Residues 10-12 (TGG), N124, R166, S196, and Q301 each bind UDP-N-acetyl-alpha-D-glucosamine.

Belongs to the glycosyltransferase 28 family. MurG subfamily.

Its subcellular location is the cell membrane. The catalysed reaction is di-trans,octa-cis-undecaprenyl diphospho-N-acetyl-alpha-D-muramoyl-L-alanyl-D-glutamyl-meso-2,6-diaminopimeloyl-D-alanyl-D-alanine + UDP-N-acetyl-alpha-D-glucosamine = di-trans,octa-cis-undecaprenyl diphospho-[N-acetyl-alpha-D-glucosaminyl-(1-&gt;4)]-N-acetyl-alpha-D-muramoyl-L-alanyl-D-glutamyl-meso-2,6-diaminopimeloyl-D-alanyl-D-alanine + UDP + H(+). Its pathway is cell wall biogenesis; peptidoglycan biosynthesis. Functionally, cell wall formation. Catalyzes the transfer of a GlcNAc subunit on undecaprenyl-pyrophosphoryl-MurNAc-pentapeptide (lipid intermediate I) to form undecaprenyl-pyrophosphoryl-MurNAc-(pentapeptide)GlcNAc (lipid intermediate II). This Desulforudis audaxviator (strain MP104C) protein is UDP-N-acetylglucosamine--N-acetylmuramyl-(pentapeptide) pyrophosphoryl-undecaprenol N-acetylglucosamine transferase.